Consider the following 141-residue polypeptide: Hemoglobin subunit alpha (141 aa).

The Globin domain maps to 1 to 141; sequence VLSPADKTNV…VSTVLTSKYR (141 aa). S3 is modified (phosphoserine). K7 carries the post-translational modification N6-succinyllysine. A Phosphothreonine modification is found at T8. K11 carries the post-translational modification N6-succinyllysine. Position 16 is an N6-acetyllysine; alternate (K16). The residue at position 16 (K16) is an N6-succinyllysine; alternate. Phosphoserine is present on S35. An N6-succinyllysine modification is found at K40. H58 provides a ligand contact to O2. H87 serves as a coordination point for heme b. S102 carries the post-translational modification Phosphoserine. At T108 the chain carries Phosphothreonine. 2 positions are modified to phosphoserine: S124 and S131. Residues T134 and T137 each carry the phosphothreonine modification. At S138 the chain carries Phosphoserine.

The protein belongs to the globin family. In terms of assembly, heterotetramer of two alpha chains and two beta chains. In terms of tissue distribution, red blood cells.

In terms of biological role, involved in oxygen transport from the lung to the various peripheral tissues. Hemopressin acts as an antagonist peptide of the cannabinoid receptor CNR1. Hemopressin-binding efficiently blocks cannabinoid receptor CNR1 and subsequent signaling. This chain is Hemoglobin subunit alpha (HBA), found in Physeter macrocephalus (Sperm whale).